We begin with the raw amino-acid sequence, 623 residues long: Chaperone protein HtpG (623 aa).

An a; substrate-binding region spans residues 1–328 (MTQEKKKFDA…SEDLPLNISR (328 aa)). The interval 329-544 (ESLQHNSILD…ESAMDIRMER (216 aa)) is b. The tract at residues 545 to 623 (FLIEQKQIAN…DIVQKAILSL (79 aa)) is c.

The protein belongs to the heat shock protein 90 family. As to quaternary structure, homodimer.

The protein localises to the cytoplasm. In terms of biological role, molecular chaperone. Has ATPase activity. The polypeptide is Chaperone protein HtpG (Rickettsia canadensis (strain McKiel)).